The primary structure comprises 115 residues: Nucleoid-associated protein Npun_F0448 (115 aa).

The protein belongs to the YbaB/EbfC family. As to quaternary structure, homodimer.

The protein localises to the cytoplasm. Its subcellular location is the nucleoid. In terms of biological role, binds to DNA and alters its conformation. May be involved in regulation of gene expression, nucleoid organization and DNA protection. The chain is Nucleoid-associated protein Npun_F0448 from Nostoc punctiforme (strain ATCC 29133 / PCC 73102).